We begin with the raw amino-acid sequence, 207 residues long: Probable molybdenum cofactor guanylyltransferase (207 aa).

Residues 9–11 (LAG), lysine 21, and aspartate 97 contribute to the GTP site. Aspartate 97 lines the Mg(2+) pocket.

This sequence belongs to the MobA family. Mg(2+) is required as a cofactor.

The protein localises to the cytoplasm. The enzyme catalyses Mo-molybdopterin + GTP + H(+) = Mo-molybdopterin guanine dinucleotide + diphosphate. Functionally, transfers a GMP moiety from GTP to Mo-molybdopterin (Mo-MPT) cofactor (Moco or molybdenum cofactor) to form Mo-molybdopterin guanine dinucleotide (Mo-MGD) cofactor. The protein is Probable molybdenum cofactor guanylyltransferase of Nostoc sp. (strain PCC 7120 / SAG 25.82 / UTEX 2576).